The sequence spans 38 residues: Large ribosomal subunit protein bL36c (38 aa).

It belongs to the bacterial ribosomal protein bL36 family.

It localises to the plastid. The protein localises to the chloroplast. This Mesostigma viride (Green alga) protein is Large ribosomal subunit protein bL36c (rpl36).